The primary structure comprises 310 residues: D-alanine--D-alanine ligase (310 aa).

An ATP-grasp domain is found at 107 to 305; sequence KKVWQSAGLP…FSALVQSILA (199 aa). 134-189 is a binding site for ATP; that stretch reads EQLHCQDFVIKPALEGSSVGVSRVKNQEQLAAAIPFAGGARAKIMAEPWIVGRELT. Aspartate 259, glutamate 272, and asparagine 274 together coordinate Mg(2+).

Belongs to the D-alanine--D-alanine ligase family. Requires Mg(2+) as cofactor. Mn(2+) is required as a cofactor.

The protein resides in the cytoplasm. It carries out the reaction 2 D-alanine + ATP = D-alanyl-D-alanine + ADP + phosphate + H(+). It participates in cell wall biogenesis; peptidoglycan biosynthesis. Its function is as follows. Cell wall formation. In Dichelobacter nodosus (strain VCS1703A), this protein is D-alanine--D-alanine ligase.